A 449-amino-acid chain; its full sequence is Allantoinase (449 aa).

Positions 61, 63, 148, 184, 240, and 313 each coordinate Zn(2+). An N6-carboxylysine modification is found at lysine 148.

Belongs to the metallo-dependent hydrolases superfamily. Allantoinase family. Homotetramer. The cofactor is Zn(2+). In terms of processing, carboxylation allows a single lysine to coordinate two zinc ions.

It carries out the reaction (S)-allantoin + H2O = allantoate + H(+). It functions in the pathway nitrogen metabolism; (S)-allantoin degradation; allantoate from (S)-allantoin: step 1/1. Its function is as follows. Catalyzes the conversion of allantoin (5-ureidohydantoin) to allantoic acid by hydrolytic cleavage of the five-member hydantoin ring. The sequence is that of Allantoinase from Desulfitobacterium hafniense (strain Y51).